The chain runs to 79 residues: uncharacterized protein (79 aa).

This is an uncharacterized protein from Escherichia coli (strain K12).